A 158-amino-acid chain; its full sequence is MQGTLSVWLAKRGLIHRSLGFDYQGIETLQIKPEDWHAIAVILYVYGYNYLRLQCAYDVAPGGLLASVYHLTRIEYGVNQAEEVCIKVFTQRSNPRIPSVFWVWKSTDFQERESYDMLGITYDSHPRLKRILMPESWMGWPLRKDYIAPNFYEIQDAY.

Belongs to the complex I 30 kDa subunit family. NDH is composed of at least 16 different subunits, 5 of which are encoded in the nucleus.

It localises to the plastid. It is found in the chloroplast thylakoid membrane. The catalysed reaction is a plastoquinone + NADH + (n+1) H(+)(in) = a plastoquinol + NAD(+) + n H(+)(out). The enzyme catalyses a plastoquinone + NADPH + (n+1) H(+)(in) = a plastoquinol + NADP(+) + n H(+)(out). Functionally, NDH shuttles electrons from NAD(P)H:plastoquinone, via FMN and iron-sulfur (Fe-S) centers, to quinones in the photosynthetic chain and possibly in a chloroplast respiratory chain. The immediate electron acceptor for the enzyme in this species is believed to be plastoquinone. Couples the redox reaction to proton translocation, and thus conserves the redox energy in a proton gradient. The sequence is that of NAD(P)H-quinone oxidoreductase subunit J, chloroplastic from Draba nemorosa (Woodland whitlowgrass).